Consider the following 362-residue polypeptide: Spermidine/putrescine import ATP-binding protein PotA (362 aa).

Positions 6–236 (VELKHVGKRY…PVNHFVADFI (231 aa)) constitute an ABC transporter domain. 38–45 (GPSGSGKT) is an ATP binding site.

This sequence belongs to the ABC transporter superfamily. Spermidine/putrescine importer (TC 3.A.1.11.1) family. The complex is composed of two ATP-binding proteins (PotA), two transmembrane proteins (PotB and PotC) and a solute-binding protein (PotD).

It localises to the cell membrane. It catalyses the reaction ATP + H2O + polyamine-[polyamine-binding protein]Side 1 = ADP + phosphate + polyamineSide 2 + [polyamine-binding protein]Side 1.. Its function is as follows. Part of the ABC transporter complex PotABCD involved in spermidine/putrescine import. Responsible for energy coupling to the transport system. The protein is Spermidine/putrescine import ATP-binding protein PotA of Lacticaseibacillus paracasei (strain ATCC 334 / BCRC 17002 / CCUG 31169 / CIP 107868 / KCTC 3260 / NRRL B-441) (Lactobacillus paracasei).